Consider the following 165-residue polypeptide: Chorismate pyruvate-lyase (165 aa).

Substrate contacts are provided by M35, R77, L115, and E156.

It belongs to the UbiC family. Monomer.

It localises to the cytoplasm. The catalysed reaction is chorismate = 4-hydroxybenzoate + pyruvate. It functions in the pathway cofactor biosynthesis; ubiquinone biosynthesis. Removes the pyruvyl group from chorismate, with concomitant aromatization of the ring, to provide 4-hydroxybenzoate (4HB) for the ubiquinone pathway. In Enterobacter sp. (strain 638), this protein is Chorismate pyruvate-lyase.